The sequence spans 259 residues: MKAAITSWADEVEADYVDGLPPSKEYVDGDYKHVTEYKFNDEGKKIKVVRSFKIEKKIVSRAVAKRRNWVKFGDSKLDKPGPNSYTTKVADEILMNYMGSKDFEHAQDPLDAGKPMAKCRICNGEHWSVKCPYKGTSMDMESKAIAAATAAVGETNKTGKYVPPFLKDGAKGRERDDSSAVRISNLSESMTEDDLEELVKKIGPYTKMYLAREKNSGLCKGFAYVHFKYRKDAAEAIEILNGHGYDHLILSVEWSKPQN.

One can recognise an RRM domain in the interval 179–257; it reads SAVRISNLSE…LILSVEWSKP (79 aa).

Belongs to the eIF-3 subunit G family. Component of the eukaryotic translation initiation factor 3 (eIF-3) complex. The eIF-3 complex interacts with pix.

The protein localises to the cytoplasm. In terms of biological role, RNA-binding component of the eukaryotic translation initiation factor 3 (eIF-3) complex, which is involved in protein synthesis of a specialized repertoire of mRNAs and, together with other initiation factors, stimulates binding of mRNA and methionyl-tRNAi to the 40S ribosome. The eIF-3 complex specifically targets and initiates translation of a subset of mRNAs involved in cell proliferation. This subunit can bind 18S rRNA. The polypeptide is Eukaryotic translation initiation factor 3 subunit G-2 (Drosophila virilis (Fruit fly)).